A 163-amino-acid chain; its full sequence is MNKKVLTFLGISFVIIVLDLTTKSLAEKYLADKAIEIIPGLFNLVLVWNKGAAFGMLAEAPETIRKLMLVGSSIIAAVITAGYVFKSNAKLSNLEVLSLALICGGSVGNLYDRFMLGQVRDFLDFYINDHHWPAFNVADASITIGIALFIGYELFWKKRRITN.

4 helical membrane passes run 5 to 25 (VLTF…TKSL), 37 to 57 (IIPG…FGML), 67 to 87 (LMLV…VFKS), and 91 to 111 (LSNL…GNLY). Active-site residues include Asp121 and Asp139. A helical membrane pass occupies residues 132-152 (WPAFNVADASITIGIALFIGY).

Belongs to the peptidase A8 family.

It is found in the cell inner membrane. It carries out the reaction Release of signal peptides from bacterial membrane prolipoproteins. Hydrolyzes -Xaa-Yaa-Zaa-|-(S,diacylglyceryl)Cys-, in which Xaa is hydrophobic (preferably Leu), and Yaa (Ala or Ser) and Zaa (Gly or Ala) have small, neutral side chains.. It participates in protein modification; lipoprotein biosynthesis (signal peptide cleavage). In terms of biological role, this protein specifically catalyzes the removal of signal peptides from prolipoproteins. In Sulfurihydrogenibium sp. (strain YO3AOP1), this protein is Lipoprotein signal peptidase.